Reading from the N-terminus, the 1868-residue chain is Dedicator of cytokinesis protein 5 (1868 aa).

One can recognise an SH3 domain in the interval lysine 8–alanine 69. A Phosphoserine modification is found at serine 365. The region spanning arginine 443–cysteine 627 is the C2 DOCK-type domain. The residue at position 818 (lysine 818) is an N6-acetyllysine. The DOCKER domain occupies tyrosine 1231–leucine 1642. The span at serine 1681–serine 1692 shows a compositional bias: low complexity. Disordered stretches follow at residues serine 1681–lysine 1730 and glutamine 1742–glutamine 1868. Residues leucine 1704–isoleucine 1728 are compositionally biased toward basic and acidic residues. 5 positions are modified to phosphoserine: serine 1755, serine 1765, serine 1771, serine 1784, and serine 1788. Residue threonine 1793 is modified to Phosphothreonine. Residues alanine 1796–leucine 1810 are compositionally biased toward polar residues. 2 positions are modified to phosphoserine: serine 1832 and serine 1867.

It belongs to the DOCK family. In terms of assembly, interacts with CRK and CRKL. Interacts (via N-terminus) with tensin TNS3 (via N-terminus); the interaction increases DOCK5 guanine nucleotide exchange activity towards Rac. Interacts with ELMO1. In terms of tissue distribution, highly expressed in lens, where it predominantly localizes to anterior epithelial cells, and is weakly expressed in lens fiber (at protein level). Expressed in brain, eye, lung, spleen and kidney, but not in thymus or peripheral blood leukocytes.

It is found in the cytoplasm. The protein localises to the cell membrane. It localises to the cell projection. Its subcellular location is the podosome. Its function is as follows. Guanine nucleotide exchange factor (GEF) for Rho and Rac. GEF proteins activate small GTPases by exchanging bound GDP for free GTP. Along with DOCK1, mediates CRK/CRKL regulation of epithelial and endothelial cell spreading and migration on type IV collagen. This chain is Dedicator of cytokinesis protein 5, found in Mus musculus (Mouse).